A 341-amino-acid polypeptide reads, in one-letter code: Glycerol-3-phosphate dehydrogenase [NAD(P)+] (341 aa).

NADPH is bound by residues S14, F15, R35, and K108. K108 and G136 together coordinate sn-glycerol 3-phosphate. NADPH is bound at residue A140. Residues K191, D244, S254, R255, and N256 each contribute to the sn-glycerol 3-phosphate site. K191 acts as the Proton acceptor in catalysis. R255 lines the NADPH pocket. Residues V279 and E281 each contribute to the NADPH site.

It belongs to the NAD-dependent glycerol-3-phosphate dehydrogenase family.

It is found in the cytoplasm. The catalysed reaction is sn-glycerol 3-phosphate + NAD(+) = dihydroxyacetone phosphate + NADH + H(+). The enzyme catalyses sn-glycerol 3-phosphate + NADP(+) = dihydroxyacetone phosphate + NADPH + H(+). The protein operates within membrane lipid metabolism; glycerophospholipid metabolism. Functionally, catalyzes the reduction of the glycolytic intermediate dihydroxyacetone phosphate (DHAP) to sn-glycerol 3-phosphate (G3P), the key precursor for phospholipid synthesis. The protein is Glycerol-3-phosphate dehydrogenase [NAD(P)+] of Pseudomonas fluorescens (strain SBW25).